A 388-amino-acid polypeptide reads, in one-letter code: Succinate--CoA ligase [ADP-forming] subunit beta (388 aa).

Residues 9 to 244 (KQLFARYGLP…QSQEDPREAQ (236 aa)) form the ATP-grasp domain. ATP is bound by residues K46, 53–55 (GRG), E99, T102, and E107. Mg(2+) contacts are provided by N199 and D213. Substrate contacts are provided by residues N264 and 321-323 (GIV).

Belongs to the succinate/malate CoA ligase beta subunit family. Heterotetramer of two alpha and two beta subunits. The cofactor is Mg(2+).

The catalysed reaction is succinate + ATP + CoA = succinyl-CoA + ADP + phosphate. It catalyses the reaction GTP + succinate + CoA = succinyl-CoA + GDP + phosphate. It participates in carbohydrate metabolism; tricarboxylic acid cycle; succinate from succinyl-CoA (ligase route): step 1/1. Functionally, succinyl-CoA synthetase functions in the citric acid cycle (TCA), coupling the hydrolysis of succinyl-CoA to the synthesis of either ATP or GTP and thus represents the only step of substrate-level phosphorylation in the TCA. The beta subunit provides nucleotide specificity of the enzyme and binds the substrate succinate, while the binding sites for coenzyme A and phosphate are found in the alpha subunit. The polypeptide is Succinate--CoA ligase [ADP-forming] subunit beta (Shigella boydii serotype 18 (strain CDC 3083-94 / BS512)).